We begin with the raw amino-acid sequence, 68 residues long: Large ribosomal subunit protein bL35 (68 aa).

Basic residues-rich tracts occupy residues 1–15 (MPKM…KRFK) and 23–38 (TARK…HKSS). The interval 1–38 (MPKMKSHSGTKKRFKVTGSGKVTARKAGKRHLNEHKSS) is disordered.

Belongs to the bacterial ribosomal protein bL35 family.

This chain is Large ribosomal subunit protein bL35, found in Cutibacterium acnes (strain DSM 16379 / KPA171202) (Propionibacterium acnes).